We begin with the raw amino-acid sequence, 42 residues long: Photosystem II reaction center protein J (42 aa).

A helical membrane pass occupies residues Ile10 to Phe30.

Belongs to the PsbJ family. As to quaternary structure, PSII is composed of 1 copy each of membrane proteins PsbA, PsbB, PsbC, PsbD, PsbE, PsbF, PsbH, PsbI, PsbJ, PsbK, PsbL, PsbM, PsbT, PsbX, PsbY, PsbZ, Psb30/Ycf12, at least 3 peripheral proteins of the oxygen-evolving complex and a large number of cofactors. It forms dimeric complexes.

It localises to the plastid. The protein resides in the chloroplast thylakoid membrane. Functionally, one of the components of the core complex of photosystem II (PSII). PSII is a light-driven water:plastoquinone oxidoreductase that uses light energy to abstract electrons from H(2)O, generating O(2) and a proton gradient subsequently used for ATP formation. It consists of a core antenna complex that captures photons, and an electron transfer chain that converts photonic excitation into a charge separation. The polypeptide is Photosystem II reaction center protein J (Staurastrum punctulatum (Green alga)).